A 121-amino-acid polypeptide reads, in one-letter code: Large ribosomal subunit protein bL20 (121 aa).

This sequence belongs to the bacterial ribosomal protein bL20 family.

In terms of biological role, binds directly to 23S ribosomal RNA and is necessary for the in vitro assembly process of the 50S ribosomal subunit. It is not involved in the protein synthesizing functions of that subunit. This Methylorubrum populi (strain ATCC BAA-705 / NCIMB 13946 / BJ001) (Methylobacterium populi) protein is Large ribosomal subunit protein bL20.